The primary structure comprises 450 residues: Bifunctional protein GlmU (450 aa).

Residues 1–229 (MRRHAIILAA…VEEIMGVNDR (229 aa)) are pyrophosphorylase. UDP-N-acetyl-alpha-D-glucosamine contacts are provided by residues 8-11 (LAAG), lysine 22, glutamine 72, and 77-78 (GT). A Mg(2+)-binding site is contributed by aspartate 102. The UDP-N-acetyl-alpha-D-glucosamine site is built by glycine 139, glutamate 154, and asparagine 227. Asparagine 227 contributes to the Mg(2+) binding site. Positions 230–250 (VMLSQAEKAMQRRTNHYHMLN) are linker. Positions 251–450 (GVTIIDPDST…RQTTKEGYRK (200 aa)) are N-acetyltransferase. UDP-N-acetyl-alpha-D-glucosamine contacts are provided by arginine 332 and lysine 350. Histidine 362 acts as the Proton acceptor in catalysis. Residues tyrosine 365 and asparagine 376 each coordinate UDP-N-acetyl-alpha-D-glucosamine. Residues 385 to 386 (NY), alanine 422, and arginine 439 contribute to the acetyl-CoA site.

This sequence in the N-terminal section; belongs to the N-acetylglucosamine-1-phosphate uridyltransferase family. It in the C-terminal section; belongs to the transferase hexapeptide repeat family. As to quaternary structure, homotrimer. Mg(2+) serves as cofactor.

It localises to the cytoplasm. It catalyses the reaction alpha-D-glucosamine 1-phosphate + acetyl-CoA = N-acetyl-alpha-D-glucosamine 1-phosphate + CoA + H(+). The enzyme catalyses N-acetyl-alpha-D-glucosamine 1-phosphate + UTP + H(+) = UDP-N-acetyl-alpha-D-glucosamine + diphosphate. The protein operates within nucleotide-sugar biosynthesis; UDP-N-acetyl-alpha-D-glucosamine biosynthesis; N-acetyl-alpha-D-glucosamine 1-phosphate from alpha-D-glucosamine 6-phosphate (route II): step 2/2. Its pathway is nucleotide-sugar biosynthesis; UDP-N-acetyl-alpha-D-glucosamine biosynthesis; UDP-N-acetyl-alpha-D-glucosamine from N-acetyl-alpha-D-glucosamine 1-phosphate: step 1/1. It participates in bacterial outer membrane biogenesis; LPS lipid A biosynthesis. In terms of biological role, catalyzes the last two sequential reactions in the de novo biosynthetic pathway for UDP-N-acetylglucosamine (UDP-GlcNAc). The C-terminal domain catalyzes the transfer of acetyl group from acetyl coenzyme A to glucosamine-1-phosphate (GlcN-1-P) to produce N-acetylglucosamine-1-phosphate (GlcNAc-1-P), which is converted into UDP-GlcNAc by the transfer of uridine 5-monophosphate (from uridine 5-triphosphate), a reaction catalyzed by the N-terminal domain. The protein is Bifunctional protein GlmU of Staphylococcus aureus (strain Mu50 / ATCC 700699).